The following is a 171-amino-acid chain: MGGLEEDLLRVGAIKFGDFVLTSGKRSTYYVDIKEAATDPSVLRKIASEFSGMIRSSKIAGMELGAVPLIVATALQMSIPYIIVRKERSHGTMSLLVGKFEKGEEIDVIEDVVTTGNSVLKAVNTLRENGAVVKRAYCVVDREEGGSDLLKENGIDLHPIIRISQVKGFRK.

5-phospho-alpha-D-ribose 1-diphosphate contacts are provided by residues Arg85, Lys86, Arg88, His90, and 110–118 (EDVVTTGNS). Residues Thr114 and Arg142 each coordinate orotate.

The protein belongs to the purine/pyrimidine phosphoribosyltransferase family. PyrE subfamily. As to quaternary structure, homodimer. The cofactor is Mg(2+).

The enzyme catalyses orotidine 5'-phosphate + diphosphate = orotate + 5-phospho-alpha-D-ribose 1-diphosphate. It functions in the pathway pyrimidine metabolism; UMP biosynthesis via de novo pathway; UMP from orotate: step 1/2. Functionally, catalyzes the transfer of a ribosyl phosphate group from 5-phosphoribose 1-diphosphate to orotate, leading to the formation of orotidine monophosphate (OMP). In Thermoplasma acidophilum (strain ATCC 25905 / DSM 1728 / JCM 9062 / NBRC 15155 / AMRC-C165), this protein is Orotate phosphoribosyltransferase.